The chain runs to 372 residues: Queuine tRNA-ribosyltransferase (372 aa).

Aspartate 89 serves as the catalytic Proton acceptor. Residues 89-93 (DSGGF), aspartate 161, and glycine 232 each bind substrate. Residues 262 to 268 (GIGDLPS) form an RNA binding region. Aspartate 281 acts as the Nucleophile in catalysis. The interval 286–290 (TKAAR) is RNA binding; important for wobble base 34 recognition. Zn(2+) contacts are provided by cysteine 319, cysteine 321, cysteine 324, and histidine 351.

This sequence belongs to the queuine tRNA-ribosyltransferase family. As to quaternary structure, homodimer. Within each dimer, one monomer is responsible for RNA recognition and catalysis, while the other monomer binds to the replacement base PreQ1. It depends on Zn(2+) as a cofactor.

It carries out the reaction 7-aminomethyl-7-carbaguanine + guanosine(34) in tRNA = 7-aminomethyl-7-carbaguanosine(34) in tRNA + guanine. Its pathway is tRNA modification; tRNA-queuosine biosynthesis. Its function is as follows. Catalyzes the base-exchange of a guanine (G) residue with the queuine precursor 7-aminomethyl-7-deazaguanine (PreQ1) at position 34 (anticodon wobble position) in tRNAs with GU(N) anticodons (tRNA-Asp, -Asn, -His and -Tyr). Catalysis occurs through a double-displacement mechanism. The nucleophile active site attacks the C1' of nucleotide 34 to detach the guanine base from the RNA, forming a covalent enzyme-RNA intermediate. The proton acceptor active site deprotonates the incoming PreQ1, allowing a nucleophilic attack on the C1' of the ribose to form the product. After dissociation, two additional enzymatic reactions on the tRNA convert PreQ1 to queuine (Q), resulting in the hypermodified nucleoside queuosine (7-(((4,5-cis-dihydroxy-2-cyclopenten-1-yl)amino)methyl)-7-deazaguanosine). This Chlamydia pneumoniae (Chlamydophila pneumoniae) protein is Queuine tRNA-ribosyltransferase.